The following is a 238-amino-acid chain: 1-(5-phosphoribosyl)-5-[(5-phosphoribosylamino)methylideneamino] imidazole-4-carboxamide isomerase (238 aa).

The active-site Proton acceptor is the Asp-8. Residue Asp-129 is the Proton donor of the active site.

The protein belongs to the HisA/HisF family.

It localises to the cytoplasm. The catalysed reaction is 1-(5-phospho-beta-D-ribosyl)-5-[(5-phospho-beta-D-ribosylamino)methylideneamino]imidazole-4-carboxamide = 5-[(5-phospho-1-deoxy-D-ribulos-1-ylimino)methylamino]-1-(5-phospho-beta-D-ribosyl)imidazole-4-carboxamide. It participates in amino-acid biosynthesis; L-histidine biosynthesis; L-histidine from 5-phospho-alpha-D-ribose 1-diphosphate: step 4/9. The chain is 1-(5-phosphoribosyl)-5-[(5-phosphoribosylamino)methylideneamino] imidazole-4-carboxamide isomerase from Anaeromyxobacter dehalogenans (strain 2CP-1 / ATCC BAA-258).